Consider the following 134-residue polypeptide: Protein Turandot E (134 aa).

An N-terminal signal peptide occupies residues 1 to 38 (MSYNRTLHSTTSILKMNSALQISCLLLVLGCLLGSGHG).

The protein belongs to the Turandot family.

It is found in the secreted. Functionally, a humoral factor that may play a role in stress tolerance. This is Protein Turandot E from Drosophila yakuba (Fruit fly).